Reading from the N-terminus, the 230-residue chain is E3 ubiquitin-protein ligase RNF114 (230 aa).

The RING-type zinc finger occupies 31 to 70; it reads CPVCLEVYEKPVQVPCGHVFCSACLQECLKPKKPVCGVCR. 2 residues coordinate Zn(2+): Cys-93 and Cys-96. The C2HC RNF-type zinc finger occupies 93–112; sequence CHGCRKNFFLSKIRAHVATC. Lys-104 carries the N6-acetyllysine modification. Positions 108 and 112 each coordinate Zn(2+). At Lys-114 the chain carries N6-acetyllysine.

In terms of assembly, interacts with XAF1, the interaction increases XAF1 stability and proapoptotic effects, and may regulate IFN signaling. Post-translationally, autoubiquitinated. Polyubiquitinated in the presence of E2 enzymes UBE2D1, UBE2D2 and UBE2D3, but only monoubiquitinated in the presence of UBE2E1.

It localises to the cytoplasm. It is found in the nucleus. The catalysed reaction is S-ubiquitinyl-[E2 ubiquitin-conjugating enzyme]-L-cysteine + [acceptor protein]-L-lysine = [E2 ubiquitin-conjugating enzyme]-L-cysteine + N(6)-ubiquitinyl-[acceptor protein]-L-lysine.. It participates in protein modification; protein ubiquitination. In terms of biological role, E3 ubiquitin-protein ligase that promotes the ubiquitination of various substrates. In turn, participates in the regulation of many biological processes including cell cycle, apoptosis, osteoclastogenesis as well as innate or adaptive immunity. Acts as negative regulator of NF-kappa-B-dependent transcription by promoting the ubiquitination and stabilization of the NF-kappa-B inhibitor TNFAIP3. May promote the ubiquitination of TRAF6 as well. Also acts as a negative regulator of T-cell activation. Inhibits cellular dsRNA responses and interferon production by targeting MAVS component for proteasomal degradation. Ubiquitinates the CDK inhibitor CDKN1A leading to its degradationand probably also CDKN1B and CDKN1C. This activity stimulates cell cycle G1-to-S phase transition and suppresses cellular senescence. May play a role in spermatogenesis. The protein is E3 ubiquitin-protein ligase RNF114 (RNF114) of Bos taurus (Bovine).